The following is a 344-amino-acid chain: N-acetyl-gamma-glutamyl-phosphate reductase (344 aa).

Cysteine 149 is a catalytic residue.

Belongs to the NAGSA dehydrogenase family. Type 1 subfamily.

The protein resides in the cytoplasm. It catalyses the reaction N-acetyl-L-glutamate 5-semialdehyde + phosphate + NADP(+) = N-acetyl-L-glutamyl 5-phosphate + NADPH + H(+). It functions in the pathway amino-acid biosynthesis; L-arginine biosynthesis; N(2)-acetyl-L-ornithine from L-glutamate: step 3/4. In terms of biological role, catalyzes the NADPH-dependent reduction of N-acetyl-5-glutamyl phosphate to yield N-acetyl-L-glutamate 5-semialdehyde. The polypeptide is N-acetyl-gamma-glutamyl-phosphate reductase (Thermoanaerobacter sp. (strain X514)).